The sequence spans 523 residues: MSEQLQPQQSMNAADEIIGRPLAQGLGEQTAMLCAERSITYRELDAATNRHGNALRAHGVGKGDRVLFLMDDSPELVAAYLGTLRIGAVAVALNVRLAPRDVLYVIQDSACRLLYIDAEFLHLYQQIAGELEQPPQVVVRGDEAPAPAIIAFKHFLDGQAATLESVQVAPDDVAYWLYSSGTTGRPKAVMHAHRSVLIADRLEREYFGIKPGDRVFTTSKMFFGWSLGHSLMGGLQCGATVIVAPGWPDAERVMATAARHRPTILFSTPVMYRNLLREGAGESAAMRDIRHFVSAGEKLPENIGQQWLDTFGIPITEGIGASETVFLFLCARPDAYRIGSCGKRVPWAEVRLLDELGNEITTPDTPGLIAIRMASQFVGYWKLPETTEKALRDGWYYPGDMFSFDADGFWYHNGRADDMLKISGQWVSPGEIESCASAVPGIAEAVVVAVPNDDGLTRLTLFIVPEDPSASQQKLSEAWMTTLRGTLSIYKCPRTIQFLEELPRTATGKVQKYRLRDMLQATL.

The protein belongs to the ATP-dependent AMP-binding enzyme family. Benzoate-CoA ligase subfamily.

It carries out the reaction 4-hydroxybenzoate + ATP + CoA = 4-hydroxybenzoyl-CoA + AMP + diphosphate. It catalyses the reaction 3-hydroxybenzoate + ATP + CoA = 3-hydroxybenzoyl-CoA + AMP + diphosphate. Functionally, catalyzes the ligation of 3-hydroxybenzoate or 4-hydroxybenzoate and CoA at the expense of ATP. The enzyme shows low activity towards benzoate, 4-aminobenzoate, 3-aminobenzoate, 3-fluorobenzoate, 4-fluorobenzoate, 3-chlorobenzoate, and 4-chlorobenzoate. There is no activity with 3,4-dihydroxybenzoate, 2,3-dihydroxybenzoate, and 2-hydroxybenzoate as substrates. This Thauera aromatica protein is 3-hydroxybenzoate--CoA/4-hydroxybenzoate--CoA ligase (hcl).